A 131-amino-acid chain; its full sequence is ER membrane protein complex subunit 5 (131 aa).

At Met-1 to Pro-3 the chain is on the cytoplasmic side. The helical transmembrane segment at Ser-4–Phe-22 threads the bilayer. Over Ser-23 to Ile-43 the chain is Lumenal. A helical transmembrane segment spans residues Asp-44–Ile-63. Residues Ala-64–Arg-131 lie on the Cytoplasmic side of the membrane. Ser-120 is subject to Phosphoserine.

The protein belongs to the membrane magnesium transporter (TC 1.A.67) family. Component of the ER membrane protein complex (EMC). As to expression, abundant in heart muscle and kidney with lower levels in liver and brain and very little expression in intestine or colon. In kidney, highest levels in distal convoluted tubule.

Its subcellular location is the endoplasmic reticulum membrane. It is found in the golgi apparatus membrane. It localises to the early endosome membrane. In terms of biological role, part of the endoplasmic reticulum membrane protein complex (EMC) that enables the energy-independent insertion into endoplasmic reticulum membranes of newly synthesized membrane proteins. Preferentially accommodates proteins with transmembrane domains that are weakly hydrophobic or contain destabilizing features such as charged and aromatic residues. Involved in the cotranslational insertion of multi-pass membrane proteins in which stop-transfer membrane-anchor sequences become ER membrane spanning helices. It is also required for the post-translational insertion of tail-anchored/TA proteins in endoplasmic reticulum membranes. By mediating the proper cotranslational insertion of N-terminal transmembrane domains in an N-exo topology, with translocated N-terminus in the lumen of the ER, controls the topology of multi-pass membrane proteins like the G protein-coupled receptors. By regulating the insertion of various proteins in membranes, it is indirectly involved in many cellular processes. May be involved Mg(2+) transport. This Mus musculus (Mouse) protein is ER membrane protein complex subunit 5.